The sequence spans 742 residues: Zinc finger protein 280C (742 aa).

Glycyl lysine isopeptide (Lys-Gly) (interchain with G-Cter in SUMO2) cross-links involve residues Lys-10, Lys-23, Lys-42, Lys-65, Lys-85, Lys-123, and Lys-135. Residues 138–168 (FTKTSPQEDSGACSVSQSDSTQDIPSSNILQ) show a composition bias toward polar residues. The tract at residues 138-243 (FTKTSPQEDS…QSAPGSSSLR (106 aa)) is disordered. Residues Lys-180, Lys-186, and Lys-193 each participate in a glycyl lysine isopeptide (Lys-Gly) (interchain with G-Cter in SUMO2) cross-link. A compositionally biased stretch (polar residues) spans 182–191 (PSTSKVNSVN). A compositionally biased stretch (low complexity) spans 200–222 (SISETRPCSSSSSQTAPSGASSQ). The span at 223-243 (TVLSNVNTSSVQSAPGSSSLR) shows a compositional bias: polar residues. C2H2-type zinc fingers lie at residues 323-345 (FKCF…MKHH), 360-383 (TTCQ…ESTH), 390-413 (TICK…KDTH), 420-443 (YICQ…RSSH), and 477-499 (YRCP…KLEH). Low complexity predominate over residues 523 to 578 (LGSSQSRASSPPSSTIPSTSLQLSVPKSKSTTTKNNSKVSANKATTTSPQTVATTT). The disordered stretch occupies residues 523–608 (LGSSQSRASS…YKQKRQRTRK (86 aa)). Positions 579–592 (GKPSASKPGTGTTK) are enriched in polar residues. Lys-580 is covalently cross-linked (Glycyl lysine isopeptide (Lys-Gly) (interchain with G-Cter in SUMO2)). A compositionally biased stretch (basic residues) spans 593-608 (SKAKPSYKQKRQRTRK).

The protein localises to the nucleus. Its function is as follows. May function as a transcription factor. The chain is Zinc finger protein 280C (Znf280c) from Mus musculus (Mouse).